The following is an 82-amino-acid chain: Small ribosomal subunit protein bS16 (82 aa).

The protein belongs to the bacterial ribosomal protein bS16 family.

The chain is Small ribosomal subunit protein bS16 from Erwinia tasmaniensis (strain DSM 17950 / CFBP 7177 / CIP 109463 / NCPPB 4357 / Et1/99).